A 159-amino-acid chain; its full sequence is Ribonuclease H (159 aa).

Residues 2 to 144 (SQDPVIIHTD…ADELATRGLQ (143 aa)) enclose the RNase H type-1 domain. Residues Asp-11, Glu-50, Asp-72, and Asp-136 each coordinate Mg(2+).

The protein belongs to the RNase H family. As to quaternary structure, monomer. Requires Mg(2+) as cofactor.

The protein resides in the cytoplasm. The catalysed reaction is Endonucleolytic cleavage to 5'-phosphomonoester.. Functionally, endonuclease that specifically degrades the RNA of RNA-DNA hybrids. The protein is Ribonuclease H of Mycolicibacterium smegmatis (strain ATCC 700084 / mc(2)155) (Mycobacterium smegmatis).